A 98-amino-acid chain; its full sequence is Large ribosomal subunit protein uL23 (98 aa).

This sequence belongs to the universal ribosomal protein uL23 family. As to quaternary structure, part of the 50S ribosomal subunit. Contacts protein L29, and trigger factor when it is bound to the ribosome.

Its function is as follows. One of the early assembly proteins it binds 23S rRNA. One of the proteins that surrounds the polypeptide exit tunnel on the outside of the ribosome. Forms the main docking site for trigger factor binding to the ribosome. This is Large ribosomal subunit protein uL23 from Rickettsia typhi (strain ATCC VR-144 / Wilmington).